The sequence spans 255 residues: Urease accessory protein UreD 1 (255 aa).

Belongs to the UreD family. In terms of assembly, ureD, UreF and UreG form a complex that acts as a GTP-hydrolysis-dependent molecular chaperone, activating the urease apoprotein by helping to assemble the nickel containing metallocenter of UreC. The UreE protein probably delivers the nickel.

Its subcellular location is the cytoplasm. Functionally, required for maturation of urease via the functional incorporation of the urease nickel metallocenter. The sequence is that of Urease accessory protein UreD 1 from Streptomyces griseus subsp. griseus (strain JCM 4626 / CBS 651.72 / NBRC 13350 / KCC S-0626 / ISP 5235).